The primary structure comprises 44 residues: Protein PsbN (44 aa).

The helical transmembrane segment at 7 to 29 (VATVFVSCLVLSITGYSLYIGFG) threads the bilayer.

Belongs to the PsbN family.

It is found in the plastid. The protein localises to the chloroplast thylakoid membrane. In terms of biological role, may play a role in photosystem I and II biogenesis. In Nephroselmis olivacea (Green alga), this protein is Protein PsbN.